Consider the following 152-residue polypeptide: S-Adenosylmethionine lyase (152 aa).

In terms of assembly, homotetramer. Interacts with host METK; this interaction induces the polymerization of METK into filaments that are enzymatically inactive.

It catalyses the reaction S-adenosyl-L-methionine = L-homoserine lactone + S-methyl-5'-thioadenosine. Functionally, degrades the intracellular SAM pools of the host cell and inhibits the host S-adenosylmethionine synthase METK/MAT, thereby preventing methylation of the viral genome. Induces the polymerization of METK into filaments that are enzymatically inactive. Keeping the viral genome in an unmethylated state allows the phage to shift from a lytic infection under normal growth conditions to a transient lysogenic infection under glucose starvation, by blocking its own expression. Does not protect the virus immune against host restriction-modification systems. In Escherichia coli (Bacteriophage T3), this protein is S-Adenosylmethionine lyase.